The sequence spans 388 residues: Succinate--CoA ligase [ADP-forming] subunit beta (388 aa).

The 228-residue stretch at Lys9 to Lys236 folds into the ATP-grasp domain. ATP-binding positions include Lys45, Gly52–Gly54, Glu91, Ser94, and Glu99. Residues Asn191 and Asp205 each coordinate Mg(2+). Residues Asn256 and Gly318–Thr320 contribute to the substrate site.

It belongs to the succinate/malate CoA ligase beta subunit family. Heterotetramer of two alpha and two beta subunits. Mg(2+) is required as a cofactor.

It carries out the reaction succinate + ATP + CoA = succinyl-CoA + ADP + phosphate. It catalyses the reaction GTP + succinate + CoA = succinyl-CoA + GDP + phosphate. Its pathway is carbohydrate metabolism; tricarboxylic acid cycle; succinate from succinyl-CoA (ligase route): step 1/1. Functionally, succinyl-CoA synthetase functions in the citric acid cycle (TCA), coupling the hydrolysis of succinyl-CoA to the synthesis of either ATP or GTP and thus represents the only step of substrate-level phosphorylation in the TCA. The beta subunit provides nucleotide specificity of the enzyme and binds the substrate succinate, while the binding sites for coenzyme A and phosphate are found in the alpha subunit. The chain is Succinate--CoA ligase [ADP-forming] subunit beta from Parafrankia sp. (strain EAN1pec).